We begin with the raw amino-acid sequence, 125 residues long: MIEQPRICVQVHSIYVETQSIPEEERFVFAYTVTVRNLGRSNVQLLGRYWLITNSNGRQTEVQGEGVIGEQPLILPGNEFQYTSGAVLETPLGTMEGHYEMIDHLGQAFRTVIPVFRLAIPALIH.

In terms of domain architecture, ApaG spans 1–125 (MIEQPRICVQ…FRLAIPALIH (125 aa)).

The protein is Protein ApaG of Yersinia pestis bv. Antiqua (strain Antiqua).